Reading from the N-terminus, the 624-residue chain is Multicopper oxidase elcG (624 aa).

The first 18 residues, 1 to 18, serve as a signal peptide directing secretion; that stretch reads MACNILNFLTGLLSLSST. 2 consecutive Plastocyanin-like domains span residues 48 to 160 and 216 to 373; these read PGRA…IERG and CMDA…TIRI. N-linked (GlcNAc...) asparagine glycosylation occurs at asparagine 65. Positions 96, 98, 140, and 142 each coordinate Cu cation. Asparagine 271, asparagine 296, and asparagine 464 each carry an N-linked (GlcNAc...) asparagine glycan. One can recognise a Plastocyanin-like 3 domain in the interval 474–603; the sequence is FLFQDPSQIE…GGMGVVILDG (130 aa). Positions 511, 514, 516, 585, 586, 587, and 591 each coordinate Cu cation.

Belongs to the multicopper oxidase family.

It functions in the pathway secondary metabolite biosynthesis. In terms of biological role, multicopper oxidase; part of the gene cluster that mediates the biosynthesis of elsinochrome C, a perelyenequinone phytotoxin structurally similar to cercosporin. The first step of elsinochrome C biosynthesis is performed by the polyketide synthase elcA which catalyzes the formation of nor-toralactone. The starter unit acyltransferase (SAT) domain of elcA initiates polyketide extension by the selective utilization of acetyl-CoA, which is elongated to the heptaketide in the beta-ketoacyl synthase (KS) domain by successive condensations with six malonyl units introduced by the malonyl acyltransferase (MAT) domain. The product template (PT) domain catalyzes C4-C9 and C2-C11 aldol cyclizations and dehydrations to a trihydroxynaphthalene, which is thought to be delivered to the thioesterase (TE) domain for product release. The bifunctional enzyme elcB then methylates nor-toralactone to toralactone before conducting an unusual oxidative aromatic ring opening. The next step in perylenequinone biosynthesis is an O-methylation at the nascent OH-6 of the elcB product performed by the O-methyltransferase elcD. The oxidative coupling of the two monomeric naphthol units in perylenequinone biosynthesis is catalyzed by the FAD-dependent monooxygenase elcE and the multicopper oxidase elcG. ElcG might catalyze the first intermolecular coupling in a regio- and stereo-selective manner via a phenol radical coupling mechanism and the elcE could forge the second C-C bond intramolecularly via a hydride transfer mechanism. The fasciclin domain-containing protein elcF might also play a role duting this step. The last piece of the puzzle in the biosynthesis of elsinochrome C is the additional annulation by enolate coupling to afford the dihydrobenzo(ghi)perylenequinone system, catalyzed by the FAD-dependent monooxygenase elcH. The protein is Multicopper oxidase elcG of Phaeosphaeria nodorum (strain SN15 / ATCC MYA-4574 / FGSC 10173) (Glume blotch fungus).